A 313-amino-acid chain; its full sequence is Ribosomal RNA small subunit methyltransferase H (313 aa).

Residues 35–37, aspartate 55, phenylalanine 80, aspartate 102, and glutamine 109 contribute to the S-adenosyl-L-methionine site; that span reads GGH.

This sequence belongs to the methyltransferase superfamily. RsmH family.

The protein localises to the cytoplasm. It catalyses the reaction cytidine(1402) in 16S rRNA + S-adenosyl-L-methionine = N(4)-methylcytidine(1402) in 16S rRNA + S-adenosyl-L-homocysteine + H(+). Functionally, specifically methylates the N4 position of cytidine in position 1402 (C1402) of 16S rRNA. The sequence is that of Ribosomal RNA small subunit methyltransferase H from Shewanella sp. (strain MR-4).